The chain runs to 88 residues: Small ribosomal subunit protein uS15 (88 aa).

It belongs to the universal ribosomal protein uS15 family. Part of the 30S ribosomal subunit. Forms a bridge to the 50S subunit in the 70S ribosome, contacting the 23S rRNA.

One of the primary rRNA binding proteins, it binds directly to 16S rRNA where it helps nucleate assembly of the platform of the 30S subunit by binding and bridging several RNA helices of the 16S rRNA. In terms of biological role, forms an intersubunit bridge (bridge B4) with the 23S rRNA of the 50S subunit in the ribosome. This chain is Small ribosomal subunit protein uS15, found in Flavobacterium johnsoniae (strain ATCC 17061 / DSM 2064 / JCM 8514 / BCRC 14874 / CCUG 350202 / NBRC 14942 / NCIMB 11054 / UW101) (Cytophaga johnsonae).